A 297-amino-acid polypeptide reads, in one-letter code: Ribosomal protein L11 methyltransferase (297 aa).

S-adenosyl-L-methionine is bound by residues threonine 150, glycine 171, aspartate 193, and asparagine 233.

This sequence belongs to the methyltransferase superfamily. PrmA family.

The protein resides in the cytoplasm. The catalysed reaction is L-lysyl-[protein] + 3 S-adenosyl-L-methionine = N(6),N(6),N(6)-trimethyl-L-lysyl-[protein] + 3 S-adenosyl-L-homocysteine + 3 H(+). Methylates ribosomal protein L11. The protein is Ribosomal protein L11 methyltransferase of Laribacter hongkongensis (strain HLHK9).